A 102-amino-acid chain; its full sequence is Carboxysome shell protein CcmK3 (102 aa).

In terms of domain architecture, BMC spans 4-90 (AVGVIQTDGF…PPDNVETVMP (87 aa)).

Belongs to the bacterial microcompartments protein family. CcmK subfamily. In terms of assembly, interacts stably with CcmK4, forming heterohexamers that can make dodecamers. Heterohexamers have a 1:2 CcmK3:CcmK4 stoichiometry. Upon expression in E.coli forms oligomers that could be dimers or trimers, but never hexamers; bulky residues in the pore region probably preclude the formation of homohexamers.

The protein localises to the carboxysome. Its function is as follows. A probably non-essential, minor shell protein of the carboxysome, a polyhedral inclusion where RuBisCO (ribulose bisphosphate carboxylase, rbcL-rbcS) is sequestered. Hexamers form sheets that form the facets of the polyhedral carboxysome. In PCC 7418 there are several CcmK paralogs with presumably functional differences. This subunit probably only makes heterohexamers with CcmK4. Heterohexamers can also make dodecamers, formation depends on buffer conditions. The protein is Carboxysome shell protein CcmK3 of Halothece sp. (strain PCC 7418) (Synechococcus sp. (strain PCC 7418)).